The following is a 225-amino-acid chain: Uridylate kinase (225 aa).

Residue 9-10 (GS) participates in ATP binding. Glycine 44 provides a ligand contact to UMP. Glycine 45 and arginine 49 together coordinate ATP. UMP is bound by residues aspartate 66 and 114-120 (THPGHTT). The ATP site is built by threonine 140, asparagine 141, tyrosine 146, and aspartate 149.

It belongs to the UMP kinase family. Homohexamer.

Its subcellular location is the cytoplasm. The catalysed reaction is UMP + ATP = UDP + ADP. Its pathway is pyrimidine metabolism; CTP biosynthesis via de novo pathway; UDP from UMP (UMPK route): step 1/1. Its activity is regulated as follows. Inhibited by UTP. In terms of biological role, catalyzes the reversible phosphorylation of UMP to UDP. The polypeptide is Uridylate kinase (Pyrococcus abyssi (strain GE5 / Orsay)).